A 579-amino-acid polypeptide reads, in one-letter code: Threonylcarbamoyladenosine tRNA methylthiotransferase (579 aa).

Ser-53 bears the Phosphoserine mark. In terms of domain architecture, MTTase N-terminal spans 64-172 (QKIWIRTWGC…VVEVVEETIK (109 aa)). Residues Cys-73 and Cys-109 each coordinate [4Fe-4S] cluster. Position 122 is a phosphoserine (Ser-122). Residues Cys-138, Cys-214, Cys-218, and Cys-221 each coordinate [4Fe-4S] cluster. The Radical SAM core domain maps to 200–431 (RKNPLIEIIS…RVFHSYSPYD (232 aa)). One can recognise a TRAM domain in the interval 431 to 493 (DHKIGERQQV…KHFMKGQPVS (63 aa)). Thr-499 carries the post-translational modification Phosphothreonine. The chain crosses the membrane as a helical span at residues 556-578 (CALRMSVGLALLGLLFAFFVKVY).

Belongs to the methylthiotransferase family. CDKAL1 subfamily. [4Fe-4S] cluster is required as a cofactor. In terms of tissue distribution, expressed in pancreatic islets.

Its subcellular location is the endoplasmic reticulum membrane. It carries out the reaction N(6)-L-threonylcarbamoyladenosine(37) in tRNA + (sulfur carrier)-SH + AH2 + 2 S-adenosyl-L-methionine = 2-methylsulfanyl-N(6)-L-threonylcarbamoyladenosine(37) in tRNA + (sulfur carrier)-H + 5'-deoxyadenosine + L-methionine + A + S-adenosyl-L-homocysteine + 2 H(+). In terms of biological role, catalyzes the methylthiolation of N6-threonylcarbamoyladenosine (t(6)A), leading to the formation of 2-methylthio-N6-threonylcarbamoyladenosine (ms(2)t(6)A) at position 37 in tRNAs that read codons beginning with adenine. This chain is Threonylcarbamoyladenosine tRNA methylthiotransferase (CDKAL1), found in Homo sapiens (Human).